The sequence spans 392 residues: RNA-binding motif protein, X-linked-like-2 (392 aa).

The RRM domain occupies 8–86 (GKLFIGGLNL…KAIKVAQATK (79 aa)). Over residues 67–78 (RDMNGKSLDGKA) the composition is skewed to basic and acidic residues. The tract at residues 67–392 (RDMNGKSLDG…LERGGGRSRY (326 aa)) is disordered. The segment covering 150-163 (RGPPPRRVGPPPKR) has biased composition (pro residues). Composition is skewed to basic and acidic residues over residues 194–229 (PRRE…REPR) and 238–283 (YTHR…REPF). The span at 319 to 331 (YSGGRDSYSSSYG) shows a compositional bias: low complexity. The span at 381-392 (GRLERGGGRSRY) shows a compositional bias: basic and acidic residues.

In terms of tissue distribution, expressed predominantly in spermatocytes and less in round spermatids (at protein level). Expressed in germ cells.

The protein resides in the nucleus. This Homo sapiens (Human) protein is RNA-binding motif protein, X-linked-like-2 (RBMXL2).